The chain runs to 1603 residues: Vitellogenin-4 (1603 aa).

Residues 1–15 (MKSIIIASLVALAIA) form the signal peptide. Residues 24–685 (FSPKSEYVYK…EKNAFLPKEV (662 aa)) form the Vitellogenin domain. An N-linked (GlcNAc...) asparagine glycan is attached at N1266. A VWFD domain is found at 1306 to 1475 (ATCKVDQSEV…SYLLKNEECE (170 aa)). 2 disulfides stabilise this stretch: C1308–C1438 and C1330–C1474.

In terms of tissue distribution, expressed in the intestine of adult hermaphrodites.

Its subcellular location is the secreted. Its function is as follows. Precursor of the egg-yolk proteins that are sources of nutrients during embryonic development. Together with other vitellogenins, may play a role in modulating life-span, acting via induction of autophagy and lysosomal lipolysis. The chain is Vitellogenin-4 (vit-4) from Caenorhabditis elegans.